A 576-amino-acid polypeptide reads, in one-letter code: Potassium-transporting ATPase potassium-binding subunit (576 aa).

A run of 12 helical transmembrane segments spans residues 3–23 (IFLDIFSFILFFGILTIISPI), 68–88 (LYALLSFNFLGFLVLFLTLLF), 137–157 (GLALQNFLSAASGIVVALVLI), 179–199 (ILYVLLPVAFFSALFLVSQGV), 267–287 (FEAFLIILIPASLVFTFGYMI), 294–314 (WFLYSVMLFVLMLFMGIQYYF), 339–359 (FGIGGTVLFSSITTATSCGAV), 369–389 (LGGLVPMSLISLGEIIFGGVG), 391–411 (GLYGMIAMVIIAVFVAGLMIG), 430–450 (VVITLVSGITALLLTTLALYT), 495–515 (ITTGLAMLIGRFIPIIAVFYM), and 537–557 (LVFGVWLVFIIIVVGALTFLP).

Belongs to the KdpA family. As to quaternary structure, the system is composed of three essential subunits: KdpA, KdpB and KdpC.

The protein localises to the cell inner membrane. Functionally, part of the high-affinity ATP-driven potassium transport (or Kdp) system, which catalyzes the hydrolysis of ATP coupled with the electrogenic transport of potassium into the cytoplasm. This subunit binds the periplasmic potassium ions and delivers the ions to the membrane domain of KdpB through an intramembrane tunnel. The sequence is that of Potassium-transporting ATPase potassium-binding subunit from Hydrogenobaculum sp. (strain Y04AAS1).